The primary structure comprises 316 residues: Pseudouridine-5'-phosphate glycosidase (316 aa).

Catalysis depends on Glu31, which acts as the Proton donor. Lys92 and Val112 together coordinate substrate. Mn(2+) is bound at residue Asp144. 146 to 148 (SAD) contacts substrate. The active-site Nucleophile is Lys165.

The protein belongs to the pseudouridine-5'-phosphate glycosidase family. In terms of assembly, homotrimer. Mn(2+) serves as cofactor.

It catalyses the reaction D-ribose 5-phosphate + uracil = psi-UMP + H2O. Its function is as follows. Catalyzes the reversible cleavage of pseudouridine 5'-phosphate (PsiMP) to ribose 5-phosphate and uracil. Functions biologically in the cleavage direction, as part of a pseudouridine degradation pathway. Part of an operon that could be involved in the biosynthesis of the blue pigment indigoidine, which is implicated in pathogenicity and protection from oxidative stress. In Dickeya dadantii (strain 3937) (Erwinia chrysanthemi (strain 3937)), this protein is Pseudouridine-5'-phosphate glycosidase.